A 137-amino-acid polypeptide reads, in one-letter code: Small ribosomal subunit protein uS12 (137 aa).

Disordered stretches follow at residues 1-21 and 36-57; these read MPTINQLVRKPRKSKVEKSDS and TKLSAPQKRGVATRVGTMTPKK. Position 102 is a 3-methylthioaspartic acid (Asp102).

The protein belongs to the universal ribosomal protein uS12 family. Part of the 30S ribosomal subunit. Contacts proteins S8 and S17. May interact with IF1 in the 30S initiation complex.

In terms of biological role, with S4 and S5 plays an important role in translational accuracy. Functionally, interacts with and stabilizes bases of the 16S rRNA that are involved in tRNA selection in the A site and with the mRNA backbone. Located at the interface of the 30S and 50S subunits, it traverses the body of the 30S subunit contacting proteins on the other side and probably holding the rRNA structure together. The combined cluster of proteins S8, S12 and S17 appears to hold together the shoulder and platform of the 30S subunit. The sequence is that of Small ribosomal subunit protein uS12 from Streptococcus agalactiae serotype Ia (strain ATCC 27591 / A909 / CDC SS700).